The following is a 103-amino-acid chain: Small ribosomal subunit protein eS25 (103 aa).

Residues 1 to 23 form a disordered region; that stretch reads MGGEDMAKKKAPSAKEGEKQQGF.

This sequence belongs to the eukaryotic ribosomal protein eS25 family.

The sequence is that of Small ribosomal subunit protein eS25 (rps25e) from Aeropyrum pernix (strain ATCC 700893 / DSM 11879 / JCM 9820 / NBRC 100138 / K1).